Reading from the N-terminus, the 1007-residue chain is Serine/threonine-protein kinase PRP4 homolog (1007 aa).

The segment covering 1-10 (MAAAETQSLR) has biased composition (polar residues). Positions 1–99 (MAAAETQSLR…EGMSPAKRTK (99 aa)) are disordered. A2 is subject to N-acetylalanine. 4 positions are modified to phosphoserine: S8, S20, S23, and S32. Basic residues-rich tracts occupy residues 39 to 59 (KHSRHKKKKHKHRSKHKKHKH) and 67 to 81 (KKHKHKHKHKKHKRK). A compositionally biased stretch (basic and acidic residues) spans 82–91 (EIIDASDKEG). Phosphoserine is present on residues S87 and S93. Residue K99 is modified to N6-acetyllysine; alternate. K99 is covalently cross-linked (Glycyl lysine isopeptide (Lys-Gly) (interchain with G-Cter in SUMO2); alternate). Residue K111 forms a Glycyl lysine isopeptide (Lys-Gly) (interchain with G-Cter in SUMO2) linkage. K117 participates in a covalent cross-link: Glycyl lysine isopeptide (Lys-Gly) (interchain with G-Cter in SUMO2); alternate. Residue K117 forms a Glycyl lysine isopeptide (Lys-Gly) (interchain with G-Cter in SUMO1); alternate linkage. S131 is subject to Phosphoserine. Phosphotyrosine is present on Y140. 2 disordered regions span residues 140–533 (YESG…EEED) and 559–583 (SNMSVPSEPSSPQSSTRTRSPSPDD). A phosphoserine mark is found at S142, S144, and S166. The segment covering 157–168 (GNRSSTRSSSTK) has biased composition (low complexity). Glycyl lysine isopeptide (Lys-Gly) (interchain with G-Cter in SUMO2) cross-links involve residues K170 and K177. Composition is skewed to basic residues over residues 179 to 202 (TTKKRSKSRSKERTRHRSDKKKSK) and 214 to 230 (RSKSKERKKSKSPSKRS). Phosphoserine is present on residues S239, S241, S257, S277, S283, S292, and S294. Positions 247–270 (RSQEKIGKARSPTDDKVKIEDKSK) are enriched in basic and acidic residues. The segment covering 302–315 (SKDRRSRSKERKSK) has biased composition (basic residues). Positions 316–325 (RSETDKEKKP) are enriched in basic and acidic residues. Phosphoserine is present on residues S328, S354, S356, S366, and S368. Over residues 342-367 (PSRRPGRSPKRRSLSPKPRDKSRRSR) the composition is skewed to basic residues. A Phosphothreonine modification is found at T385. S387 is modified (phosphoserine). Basic and acidic residues-rich tracts occupy residues 395–408 (RSLERKRREPERRR) and 415–429 (RPRDDILSRRERSKD). 3 positions are modified to phosphoserine: S427, S431, and S437. Basic residues predominate over residues 438-497 (PTRRRSRSPIRRRSRSPLRRSRSPRRRSRSPRRRDRGRRSRSRLRRRSRSRGGRRRRSRS). A phosphoserine mark is found at S518, S519, S520, S565, S569, S578, and S580. A compositionally biased stretch (acidic residues) spans 518-533 (SSSDDNLEDFDVEEED). The segment covering 562 to 581 (SVPSEPSSPQSSTRTRSPSP) has biased composition (low complexity). Glycyl lysine isopeptide (Lys-Gly) (interchain with G-Cter in SUMO2) cross-links involve residues K593 and K659. Residues 687 to 1006 (YNVYGYTGQG…ALQHAFIQEK (320 aa)) form the Protein kinase domain. ATP is bound by residues 693 to 701 (TGQGVFSNV) and K717. K717 carries the post-translational modification N6-acetyllysine. The Proton acceptor role is filled by D815. Y849 is modified (phosphotyrosine). S852 carries the phosphoserine modification.

The protein belongs to the protein kinase superfamily. CMGC Ser/Thr protein kinase family. In terms of assembly, interacts with CLK1 C-terminus. Associates with the U5 snRNP and NCOR1 deacetylase complexes. Identified in the spliceosome C complex. Phosphorylated by CLK1. Autophosphorylated; phosphorylation inhibits interaction with its targets, such as PRPF6 or SMARCA4. In terms of tissue distribution, ubiquitous.

It is found in the nucleus. Its subcellular location is the chromosome. It localises to the centromere. The protein localises to the kinetochore. It carries out the reaction L-seryl-[protein] + ATP = O-phospho-L-seryl-[protein] + ADP + H(+). The catalysed reaction is L-threonyl-[protein] + ATP = O-phospho-L-threonyl-[protein] + ADP + H(+). In terms of biological role, serine/threonine kinase involved in spliceosomal assembly as well as mitosis and signaling regulation. Connects chromatin mediated regulation of transcription and pre-mRNA splicing. During spliceosomal assembly, interacts with and phosphorylates PRPF6 and PRPF31, components of the U4/U6-U5 tri-small nuclear ribonucleoprotein (snRNP), to facilitate the formation of the spliceosome B complex. Plays a role in regulating transcription and the spindle assembly checkpoint (SAC). Associates with U5 snRNP and NCOR1 deacetylase complexes which may allow a coordination of pre-mRNA splicing with chromatin remodeling events involved in transcriptional regulation. Associates and probably phosphorylates SMARCA4 and NCOR1. Phosphorylates SRSF1. Associates with kinetochores during mitosis and is necessary for recruitment and maintenance of the checkpoint proteins such as MAD1L1 and MAD12L1 at the kinetochores. Phosphorylates and regulates the activity of the transcription factors such as ELK1 and KLF13. Phosphorylates nuclear YAP1 and WWTR1/TAZ which induces nuclear exclusion and regulates Hippo signaling pathway, involved in tissue growth control. The protein is Serine/threonine-protein kinase PRP4 homolog of Homo sapiens (Human).